A 283-amino-acid chain; its full sequence is Pantothenate synthetase (283 aa).

Position 30–37 (30–37 (MGYYHSGH)) interacts with ATP. His-37 acts as the Proton donor in catalysis. Position 61 (Gln-61) interacts with (R)-pantoate. Gln-61 serves as a coordination point for beta-alanine. Residue 147–150 (GQKD) coordinates ATP. Gln-153 provides a ligand contact to (R)-pantoate. ATP is bound by residues Val-176 and 184–187 (MSSR).

Belongs to the pantothenate synthetase family. In terms of assembly, homodimer.

The protein resides in the cytoplasm. The catalysed reaction is (R)-pantoate + beta-alanine + ATP = (R)-pantothenate + AMP + diphosphate + H(+). It participates in cofactor biosynthesis; (R)-pantothenate biosynthesis; (R)-pantothenate from (R)-pantoate and beta-alanine: step 1/1. In terms of biological role, catalyzes the condensation of pantoate with beta-alanine in an ATP-dependent reaction via a pantoyl-adenylate intermediate. This Nitratidesulfovibrio vulgaris (strain DSM 19637 / Miyazaki F) (Desulfovibrio vulgaris) protein is Pantothenate synthetase.